The following is a 421-amino-acid chain: MDRNSFTAYGPATGAITESGEQENDHTKPHTWKTFAKYACFESEAERQWWNDSGALIARFLSLTNGDIDQQYQCLLFVRQVLIPALGPYPPVRRCCINTTEIGMELSLNFQGPGEPVFRVSIDPVSRMTGTPMDPLNINTVNNMITRLASMGIKGFDRTLHHHFTREFCMSEQSMQSYQRDSGEAIAWSQTILAFDFKGGDVVTKQYIWTRHAARASGLHPHSLIRRAISRVENQMHCSAAVELVLEYMETFNADIPVPFFSWDLVDPTQSRFKIYGISWQWSWAKAEEVCTLGGKLNHHDIDLLKKLWHILKLDEFTPTMGFTWNYEIRPGQPKPEVRLYLAICDRSDEEVAQAVVQWFELLGWHERAQSYPETLRYLHKTKSAHTWLSVTVSEKGVYTSLYYHPLGNGSDDFKIRENWF.

A disordered region spans residues 1-28 (MDRNSFTAYGPATGAITESGEQENDHTK). L-tryptophan is bound at residue E105. Positions 119, 272, 274, 276, and 341 each coordinate substrate.

The protein belongs to the tryptophan dimethylallyltransferase family.

It carries out the reaction yaequinolone E + dimethylallyl diphosphate + H2O = [(1'E)-3'-hydroxy-3',7'-dimethylocta-1',6'-dien-1'-yl]-quinolinone B + diphosphate. Its pathway is secondary metabolite biosynthesis. It functions in the pathway alkaloid biosynthesis. It participates in mycotoxin biosynthesis. Prenyltransferase; part of the gene cluster that mediates the biosynthesis of the aspoquinolone mycotoxins. Within the pathway, the prenyltransferase asqH2 performs the second alkylation with DMAPP at delta(3') double bond to yield a carbenium ion intermediate, which can be attacked by H(2)O to yield a styrenyl quinolone containing a C3'-hydroxyprenyl chain. The first step of the pathway is catalyzed by the nonribosomal peptide synthetase asqK that condenses anthranilic acid and O-methyl-L-tyrosine to produce 4'-methoxycyclopeptin. 4'-methoxycyclopeptin is then converted to 4'-methoxydehydrocyclopeptin by the ketoglutarate-dependent dioxygenase asqJ. AsqJ also converts its first product 4'-methoxydehydrocyclopeptin to 4'-methoxycyclopenin. The following conversion of 4'-methoxycyclopenin into 4'-methoxyviridicatin is catalyzed by the cyclopenase asqI. 4'-methoxyviridicatin is the precursor of quinolone natural products, and is further converted to quinolinone B. The prenyltransferase asqH1 then catalyzes the canonical Friedel-Crafts alkylation of quinolinone B with dimethylallyl cation to yield dimethylallyl quinolone, which is subjected to FAD-dependent dehydrogenation by the FAD-linked oxidoreductase asqF to yield conjugated aryl diene. The delta(3') double bond then serves as the site of the second alkylation with DMAPP catalyzed by the prenyltransferase asqH2 to yield a carbenium ion intermediate, which can be attacked by H(2)O to yield a styrenyl quinolone containing a C3'-hydroxyprenyl chain. The FAD-dependent monooxygenase asqG performs epoxidation of the terminal C7'-C8' olefin. Finally, after dehydratation of the epoxide at C3 by asqC, the quinolone epoxide rearrangement protein asqO catalyzes an enzymatic 3-exo-tet cyclization to yield the cyclopropyl-THF ring system in aspoquinolone. The sequence is that of Prenyltransferase asqH2 from Emericella nidulans (strain FGSC A4 / ATCC 38163 / CBS 112.46 / NRRL 194 / M139) (Aspergillus nidulans).